The following is a 392-amino-acid chain: Dual-specificity RNA methyltransferase RlmN (392 aa).

Glu-115 acts as the Proton acceptor in catalysis. In terms of domain architecture, Radical SAM core spans 121-358 (EVDRGTLCIS…YKAGYASPIR (238 aa)). A disulfide bridge links Cys-128 with Cys-369. Residues Cys-135, Cys-139, and Cys-142 each coordinate [4Fe-4S] cluster. S-adenosyl-L-methionine-binding positions include 195–196 (GE), Ser-227, 249–251 (SFH), and Asn-326. Cys-369 acts as the S-methylcysteine intermediate in catalysis.

This sequence belongs to the radical SAM superfamily. RlmN family. [4Fe-4S] cluster serves as cofactor.

The protein resides in the cytoplasm. The catalysed reaction is adenosine(2503) in 23S rRNA + 2 reduced [2Fe-2S]-[ferredoxin] + 2 S-adenosyl-L-methionine = 2-methyladenosine(2503) in 23S rRNA + 5'-deoxyadenosine + L-methionine + 2 oxidized [2Fe-2S]-[ferredoxin] + S-adenosyl-L-homocysteine. It carries out the reaction adenosine(37) in tRNA + 2 reduced [2Fe-2S]-[ferredoxin] + 2 S-adenosyl-L-methionine = 2-methyladenosine(37) in tRNA + 5'-deoxyadenosine + L-methionine + 2 oxidized [2Fe-2S]-[ferredoxin] + S-adenosyl-L-homocysteine. Specifically methylates position 2 of adenine 2503 in 23S rRNA and position 2 of adenine 37 in tRNAs. m2A2503 modification seems to play a crucial role in the proofreading step occurring at the peptidyl transferase center and thus would serve to optimize ribosomal fidelity. The polypeptide is Dual-specificity RNA methyltransferase RlmN (Jannaschia sp. (strain CCS1)).